A 338-amino-acid polypeptide reads, in one-letter code: Lipoate-protein ligase A (338 aa).

The 188-residue stretch at 29–216 folds into the BPL/LPL catalytic domain; it reads PATQRVLFLW…AFFVHYGERV (188 aa). Residues Arg71, 76–79, and Lys134 each bind ATP; that span reads GAVF. Residue Lys134 coordinates (R)-lipoate.

It belongs to the LplA family. Monomer.

It localises to the cytoplasm. The enzyme catalyses L-lysyl-[lipoyl-carrier protein] + (R)-lipoate + ATP = N(6)-[(R)-lipoyl]-L-lysyl-[lipoyl-carrier protein] + AMP + diphosphate + H(+). It functions in the pathway protein modification; protein lipoylation via exogenous pathway; protein N(6)-(lipoyl)lysine from lipoate: step 1/2. The protein operates within protein modification; protein lipoylation via exogenous pathway; protein N(6)-(lipoyl)lysine from lipoate: step 2/2. Its function is as follows. Catalyzes both the ATP-dependent activation of exogenously supplied lipoate to lipoyl-AMP and the transfer of the activated lipoyl onto the lipoyl domains of lipoate-dependent enzymes. The sequence is that of Lipoate-protein ligase A from Salmonella newport (strain SL254).